A 184-amino-acid polypeptide reads, in one-letter code: ATP-dependent protease subunit HslV (184 aa).

Thr11 is an active-site residue. Na(+) contacts are provided by Ala165, Cys168, and Thr171.

This sequence belongs to the peptidase T1B family. HslV subfamily. In terms of assembly, a double ring-shaped homohexamer of HslV is capped on each side by a ring-shaped HslU homohexamer. The assembly of the HslU/HslV complex is dependent on binding of ATP.

The protein localises to the cytoplasm. It catalyses the reaction ATP-dependent cleavage of peptide bonds with broad specificity.. Allosterically activated by HslU binding. Protease subunit of a proteasome-like degradation complex believed to be a general protein degrading machinery. This is ATP-dependent protease subunit HslV from Zymomonas mobilis subsp. mobilis (strain ATCC 31821 / ZM4 / CP4).